The following is a 640-amino-acid chain: Fructose-1,6-bisphosphatase class 3 (640 aa).

This sequence belongs to the FBPase class 3 family. Requires Mn(2+) as cofactor.

It catalyses the reaction beta-D-fructose 1,6-bisphosphate + H2O = beta-D-fructose 6-phosphate + phosphate. It participates in carbohydrate biosynthesis; gluconeogenesis. This chain is Fructose-1,6-bisphosphatase class 3, found in Lactococcus lactis subsp. cremoris (strain MG1363).